Here is a 582-residue protein sequence, read N- to C-terminus: Vesicular glutamate transporter 2 (582 aa).

Residues 1 to 71 (MESVKQRILT…CTCFGLPRRY (71 aa)) lie on the Cytoplasmic side of the membrane. Residues 72-92 (IIAIMSGLGFCISFGIRCNLG) form a helical membrane-spanning segment. Over 93-125 (VAIVDMVNNSTIHRGGKVIKEKAKFNWDPETVG) the chain is Vesicular. Residues Asn-100 and Asn-101 are each glycosylated (N-linked (GlcNAc...) asparagine). Residues 126–146 (MIHGSFFWGYIITQIPGGYIA) traverse the membrane as a helical segment. Residues 147-148 (SR) are Cytoplasmic-facing. A helical membrane pass occupies residues 149 to 169 (LAANRVFGAAILLTSTLNMLI). Over 170-177 (PSAARVHY) the chain is Vesicular. A helical membrane pass occupies residues 178 to 198 (GCVIFVRILQGLVEGVTYPAC). Over 199–216 (HGIWSKWAPPLERSRLAT) the chain is Cytoplasmic. Residues 217–237 (TSFCGSYAGAVIAMPLAGILV) form a helical membrane-spanning segment. At 238 to 244 (QYTGWSS) the chain is on the vesicular side. A helical membrane pass occupies residues 245–265 (VFYVYGSFGMIWYMFWLLVSY). The Cytoplasmic segment spans residues 266–310 (ESPAKHPTITDEERRYIEESIGESANLLGAMEKFKTPWRKFFTSM). A helical transmembrane segment spans residues 311-331 (PVYAIIVANFCRSWTFYLLLI). At 332-349 (SQPAYFEEVFGFEISKVG) the chain is on the vesicular side. Residues 350–370 (MLSAVPHLVMTIIVPIGGQIA) traverse the membrane as a helical segment. Topologically, residues 371 to 386 (DFLRSKQILSTTTVRK) are cytoplasmic. The helical transmembrane segment at 387-407 (IMNCGGFGMEATLLLVVGYSH) threads the bilayer. Residues 408–409 (TR) are Vesicular-facing. A helical transmembrane segment spans residues 410–430 (GVAISFLVLAVGFSGFAISGF). At 431 to 443 (NVNHLDIAPRYAS) the chain is on the cytoplasmic side. Residues 444–464 (ILMGISNGVGTLSGMVCPIIV) form a helical membrane-spanning segment. The Vesicular segment spans residues 465–477 (GAMTKNKSREEWQ). N-linked (GlcNAc...) asparagine glycosylation occurs at Asn-470. A helical transmembrane segment spans residues 478–498 (YVFLIAALVHYGGVIFYAIFA). The Cytoplasmic portion of the chain corresponds to 499–582 (SGEKQPWADP…YNYKDRDDYS (84 aa)).

This sequence belongs to the major facilitator superfamily. Sodium/anion cotransporter family. VGLUT subfamily.

Its subcellular location is the cytoplasmic vesicle. It localises to the secretory vesicle. The protein resides in the synaptic vesicle membrane. The protein localises to the synapse. It is found in the synaptosome. Its subcellular location is the cell membrane. It catalyses the reaction L-glutamate(out) = L-glutamate(in). The enzyme catalyses 3 Na(+)(out) + phosphate(out) = 3 Na(+)(in) + phosphate(in). It carries out the reaction phosphate(in) = phosphate(out). The catalysed reaction is K(+)(in) + H(+)(out) = K(+)(out) + H(+)(in). It catalyses the reaction chloride(in) = chloride(out). With respect to regulation, chloride channel activity is allosterically activated by lumenal H(+) and Cl(-) leading to synaptic vesicles acidification. The L-glutamate transport activity is allosterically activated by lumenal H(+) and Cl(-). The allosteric requirement for H(+) efficiently prevents non-vesicular efflux across the plasma membrane. The L-glutamate uniporter activity exhibits a biphasic dependence on chloride concentration. In terms of biological role, multifunctional transporter that transports L-glutamate as well as multiple ions such as chloride, proton, potassium, sodium and phosphate. At the synaptic vesicle membrane, mainly functions as a uniporter which transports preferentially L-glutamate but also, phosphate from the cytoplasm into synaptic vesicles at presynaptic nerve terminals of excitatory neural cells. The L-glutamate or phosphate uniporter activity is electrogenic and is driven by the proton electrochemical gradient, mainly by the electrical gradient established by the vacuolar H(+)-ATPase across the synaptic vesicle membrane. In addition, functions as a chloride channel that allows a chloride permeation through the synaptic vesicle membrane therefore affects the proton electrochemical gradient and promotes synaptic vesicles acidification. Moreover, functions as a vesicular K(+)/H(+) antiport allowing to maintain the electrical gradient and to decrease chemical gradient and therefore sustain vesicular L-glutamate uptake. The vesicular H(+)/H(+) antiport activity is electroneutral. At the plasma membrane, following exocytosis, functions as a symporter of Na(+) and phosphate from the extracellular space to the cytoplasm allowing synaptic phosphate homeostasis regulation. The symporter activity is driven by an inside negative membrane potential and is electrogenic. Also involved in the regulation of retinal hyaloid vessel regression during postnatal development. May also play a role in the endocrine L-glutamatergic system of other tissues such as pineal gland and pancreas. The protein is Vesicular glutamate transporter 2 of Bos taurus (Bovine).